Reading from the N-terminus, the 127-residue chain is Ribosome-binding factor A (127 aa).

This sequence belongs to the RbfA family. Monomer. Binds 30S ribosomal subunits, but not 50S ribosomal subunits or 70S ribosomes.

Its subcellular location is the cytoplasm. Functionally, one of several proteins that assist in the late maturation steps of the functional core of the 30S ribosomal subunit. Associates with free 30S ribosomal subunits (but not with 30S subunits that are part of 70S ribosomes or polysomes). Required for efficient processing of 16S rRNA. May interact with the 5'-terminal helix region of 16S rRNA. In Stenotrophomonas maltophilia (strain K279a), this protein is Ribosome-binding factor A.